The chain runs to 147 residues: Transcriptional regulator MraZ (147 aa).

SpoVT-AbrB domains are found at residues 5-51 and 80-123; these read GTPV…PQPV and ACDV…DSEK.

Belongs to the MraZ family. As to quaternary structure, forms oligomers.

It is found in the cytoplasm. Its subcellular location is the nucleoid. This Nitrosospira multiformis (strain ATCC 25196 / NCIMB 11849 / C 71) protein is Transcriptional regulator MraZ.